Here is a 478-residue protein sequence, read N- to C-terminus: MAEAATPKIGSVGRVTQVIGAVVDVAFEGELPKILNALETSNNGNRLVLEVAQHLGENVVRTIAMDSSEGLVRGQEVADTGAPIMVPVGNETLGRIMNVIGEPVDEAGPLVTAHKRAIHQDAPSYVEQSTESQILVTGIKVVDLLAPYARGGKIGLFGGAGVGKTVLIMELINNVAKAHGGYSVFAGVGERTREGNDLYHEMIESNVNKHGGGEGSKAALVYGQMNEPPGARARVALTGLTVAEHFRDQGQDVLFFVDNIFRFTQAGSEVSALLGRIPSAVGYQPTLATDMGQMQERITTTTTGSITSVQAIYVPADDLTDPAPATSFAHLDATTVLSRSIAEKGIYPAVDPLDSTSRMLDPMVVGEEHYEVARKVQSTLQRYKALQDIIAILGMDELSEDDKIAVARARKIERFLSQPFFVAEVFTGSPGKLVALEDTIKGFKGLVNGEYDHLPEAAFYMVGSMEEAVEKAKKLAAA.

158 to 165 (GGAGVGKT) is a binding site for ATP.

The protein belongs to the ATPase alpha/beta chains family. As to quaternary structure, F-type ATPases have 2 components, CF(1) - the catalytic core - and CF(0) - the membrane proton channel. CF(1) has five subunits: alpha(3), beta(3), gamma(1), delta(1), epsilon(1). CF(0) has three main subunits: a(1), b(2) and c(9-12). The alpha and beta chains form an alternating ring which encloses part of the gamma chain. CF(1) is attached to CF(0) by a central stalk formed by the gamma and epsilon chains, while a peripheral stalk is formed by the delta and b chains.

Its subcellular location is the cell inner membrane. The enzyme catalyses ATP + H2O + 4 H(+)(in) = ADP + phosphate + 5 H(+)(out). In terms of biological role, produces ATP from ADP in the presence of a proton gradient across the membrane. The catalytic sites are hosted primarily by the beta subunits. The chain is ATP synthase subunit beta from Rhizobium johnstonii (strain DSM 114642 / LMG 32736 / 3841) (Rhizobium leguminosarum bv. viciae).